Reading from the N-terminus, the 617-residue chain is Proline--tRNA ligase (617 aa).

This sequence belongs to the class-II aminoacyl-tRNA synthetase family. ProS type 1 subfamily. As to quaternary structure, homodimer.

Its subcellular location is the cytoplasm. The enzyme catalyses tRNA(Pro) + L-proline + ATP = L-prolyl-tRNA(Pro) + AMP + diphosphate. Catalyzes the attachment of proline to tRNA(Pro) in a two-step reaction: proline is first activated by ATP to form Pro-AMP and then transferred to the acceptor end of tRNA(Pro). As ProRS can inadvertently accommodate and process non-cognate amino acids such as alanine and cysteine, to avoid such errors it has two additional distinct editing activities against alanine. One activity is designated as 'pretransfer' editing and involves the tRNA(Pro)-independent hydrolysis of activated Ala-AMP. The other activity is designated 'posttransfer' editing and involves deacylation of mischarged Ala-tRNA(Pro). The misacylated Cys-tRNA(Pro) is not edited by ProRS. This Streptococcus agalactiae serotype III (strain NEM316) protein is Proline--tRNA ligase.